The primary structure comprises 377 residues: Polar flagellin F (377 aa).

2 coiled-coil regions span residues 98–131 (QSAN…ETTS) and 302–339 (DSQR…IQDT).

This sequence belongs to the bacterial flagellin family. Heteromer of multiple flagellin subunits including FlaA, FlaB/D, FlaC, FlaE and FlaF.

It localises to the secreted. Its subcellular location is the bacterial flagellum. Its function is as follows. Flagellin is the subunit protein which polymerizes to form the filaments of bacterial flagella. The protein is Polar flagellin F (flaF) of Vibrio parahaemolyticus serotype O3:K6 (strain RIMD 2210633).